The following is a 562-amino-acid chain: Ikaros family zinc finger protein (562 aa).

3 consecutive C2H2-type zinc fingers follow at residues isoleucine 45–histidine 67, phenylalanine 73–histidine 95, and phenylalanine 101–histidine 123. The C2H2-type 4; degenerate zinc-finger motif lies at tyrosine 129 to proline 152. Disordered stretches follow at residues asparagine 178 to proline 210, glutamine 293 to threonine 342, glutamine 361 to aspartate 404, and aspartate 451 to aspartate 473. The segment covering proline 307–serine 326 has biased composition (low complexity). Residues glycine 327–glutamate 336 are compositionally biased toward polar residues. The span at aspartate 369–proline 383 shows a compositional bias: basic and acidic residues. Residues glutamate 456–threonine 471 are compositionally biased toward polar residues. 2 consecutive C2H2-type zinc fingers follow at residues tryptophan 494–histidine 516 and leucine 522–histidine 546.

This sequence belongs to the Ikaros C2H2-type zinc-finger protein family. As to expression, expression is strongest in the anterior Fol cells of the oikoplastic epithelium.

The protein localises to the nucleus. The polypeptide is Ikaros family zinc finger protein (Oikopleura dioica (Tunicate)).